Reading from the N-terminus, the 146-residue chain is Putative transposon Ty5-1 protein YCL075W (146 aa).

The polypeptide is Putative transposon Ty5-1 protein YCL075W (TY5B) (Saccharomyces cerevisiae (strain ATCC 204508 / S288c) (Baker's yeast)).